The primary structure comprises 65 residues: Alpha-like toxin Bom4 (65 aa).

One can recognise an LCN-type CS-alpha/beta domain in the interval R2–H64. Cystine bridges form between C12-C63, C16-C36, C22-C46, and C26-C48.

It belongs to the long (4 C-C) scorpion toxin superfamily. Sodium channel inhibitor family. Alpha subfamily. In terms of tissue distribution, expressed by the venom gland.

The protein localises to the secreted. In terms of biological role, alpha toxins bind voltage-independently at site-3 of sodium channels (Nav) and inhibit the inactivation of the activated channels, thereby blocking neuronal transmission. This alpha-like toxin is highly toxic to mice and insects. This Buthus occitanus mardochei (Moroccan scorpion) protein is Alpha-like toxin Bom4.